Here is a 216-residue protein sequence, read N- to C-terminus: Large ribosomal subunit protein uL3 (216 aa).

Glutamine 157 is subject to N5-methylglutamine.

Belongs to the universal ribosomal protein uL3 family. In terms of assembly, part of the 50S ribosomal subunit. Forms a cluster with proteins L14 and L19. In terms of processing, methylated by PrmB.

Its function is as follows. One of the primary rRNA binding proteins, it binds directly near the 3'-end of the 23S rRNA, where it nucleates assembly of the 50S subunit. In Xanthomonas campestris pv. campestris (strain 8004), this protein is Large ribosomal subunit protein uL3.